Consider the following 66-residue polypeptide: Beta-toxin Cbo4 (66 aa).

The 66-residue stretch at 1–66 folds into the LCN-type CS-alpha/beta domain; it reads KEGYIVDYHT…VWPLPNKRCK (66 aa). 4 cysteine pairs are disulfide-bonded: cysteine 12–cysteine 65, cysteine 16–cysteine 41, cysteine 25–cysteine 46, and cysteine 29–cysteine 48. The residue at position 66 (lysine 66) is a Lysine amide.

This sequence belongs to the long (4 C-C) scorpion toxin superfamily. Sodium channel inhibitor family. Beta subfamily. As to expression, expressed by the venom gland.

Its subcellular location is the secreted. In terms of biological role, beta toxins bind voltage-independently at site-4 of sodium channels and shift the voltage of activation toward more negative potentials thereby affecting sodium channel activation and promoting spontaneous and repetitive firing. Is active on the human voltage-gated sodium channels Nav1.4/SCN4A, Nav1.5/SCN5A and Nav1.6/SCN8A when tested at 200 nM. In vivo, is toxic to mice when intraperitoneally injected. This chain is Beta-toxin Cbo4, found in Centruroides bonito (Scorpion).